We begin with the raw amino-acid sequence, 236 residues long: Rho-related GTP-binding protein RhoV (236 aa).

Residues Met-1–Pro-27 form a disordered region. Pro residues predominate over residues Glu-10–Pro-20. Ser-25 carries the phosphoserine modification. GTP is bound by residues Gly-38–Ser-45, Asp-85–Gln-89, and Thr-143–Asp-146. A lipid anchor (S-palmitoyl cysteine) is attached at Cys-234.

This sequence belongs to the small GTPase superfamily. Rho family. In terms of assembly, interacts with PAK2. Requires Mg(2+) as cofactor. In terms of tissue distribution, highly expressed in pancreas, placenta, and fetal brain.

The protein resides in the cell membrane. It is found in the endosome membrane. Plays a role in the control of the actin cytoskeleton via activation of the JNK pathway. The polypeptide is Rho-related GTP-binding protein RhoV (Homo sapiens (Human)).